We begin with the raw amino-acid sequence, 109 residues long: Large ribosomal subunit protein uL22 (109 aa).

This sequence belongs to the universal ribosomal protein uL22 family. Part of the 50S ribosomal subunit.

Its function is as follows. This protein binds specifically to 23S rRNA; its binding is stimulated by other ribosomal proteins, e.g. L4, L17, and L20. It is important during the early stages of 50S assembly. It makes multiple contacts with different domains of the 23S rRNA in the assembled 50S subunit and ribosome. The globular domain of the protein is located near the polypeptide exit tunnel on the outside of the subunit, while an extended beta-hairpin is found that lines the wall of the exit tunnel in the center of the 70S ribosome. This is Large ribosomal subunit protein uL22 from Chromobacterium violaceum (strain ATCC 12472 / DSM 30191 / JCM 1249 / CCUG 213 / NBRC 12614 / NCIMB 9131 / NCTC 9757 / MK).